The chain runs to 60 residues: uncharacterized protein (60 aa).

This is an uncharacterized protein from Acidianus convivator (ATV).